Here is a 175-residue protein sequence, read N- to C-terminus: MLTSGIILLSGGLLSPNPGLIFWTAVTFVIVLVILKKIAWGPIVSMLEEREKGIQSAIDRAHTAKEEAESILKKNKEMLAKADAEADKIIREGKEYADKVRSELTEKAQVESQKMIAAAKEEIEQEKRRALDVLRNEVADMAVKGAEKIIRTTLDADKQKAVVNDMINEMAAKRN.

Residues 20–40 (LIFWTAVTFVIVLVILKKIAW) traverse the membrane as a helical segment.

It belongs to the ATPase B chain family. In terms of assembly, F-type ATPases have 2 components, F(1) - the catalytic core - and F(0) - the membrane proton channel. F(1) has five subunits: alpha(3), beta(3), gamma(1), delta(1), epsilon(1). F(0) has four main subunits: a(1), b(2) and c(10-14). The alpha and beta chains form an alternating ring which encloses part of the gamma chain. F(1) is attached to F(0) by a central stalk formed by the gamma and epsilon chains, while a peripheral stalk is formed by the delta and b chains.

The protein localises to the cell inner membrane. F(1)F(0) ATP synthase produces ATP from ADP in the presence of a proton or sodium gradient. F-type ATPases consist of two structural domains, F(1) containing the extramembraneous catalytic core and F(0) containing the membrane proton channel, linked together by a central stalk and a peripheral stalk. During catalysis, ATP synthesis in the catalytic domain of F(1) is coupled via a rotary mechanism of the central stalk subunits to proton translocation. Its function is as follows. Component of the F(0) channel, it forms part of the peripheral stalk, linking F(1) to F(0). This Chlorobaculum parvum (strain DSM 263 / NCIMB 8327) (Chlorobium vibrioforme subsp. thiosulfatophilum) protein is ATP synthase subunit b.